We begin with the raw amino-acid sequence, 239 residues long: Ribonuclease HII (239 aa).

The 192-residue stretch at 30-221 (GPVAGVDEVG…VRRLVTAGTP (192 aa)) folds into the RNase H type-2 domain. Aspartate 36, glutamate 37, and aspartate 130 together coordinate a divalent metal cation.

This sequence belongs to the RNase HII family. Requires Mn(2+) as cofactor. Mg(2+) is required as a cofactor.

The protein localises to the cytoplasm. It carries out the reaction Endonucleolytic cleavage to 5'-phosphomonoester.. Endonuclease that specifically degrades the RNA of RNA-DNA hybrids. The polypeptide is Ribonuclease HII (Mycobacterium sp. (strain KMS)).